The chain runs to 396 residues: Flavohemoprotein (396 aa).

The Globin domain maps to 1 to 136 (MLDTQTIAIV…LADVFIQRES (136 aa)). A heme b-binding site is contributed by histidine 85. Residues tyrosine 95 and glutamate 135 each act as charge relay system in the active site. Residues 147–396 (GGWRTLRRFR…YECFGPHKVI (250 aa)) form a reductase region. The FAD-binding FR-type domain maps to 150 to 255 (RTLRRFRIIK…APPRGDFFLD (106 aa)). FAD is bound by residues tyrosine 188 and 204-207 (RQYS). 268 to 273 (GVGQTP) serves as a coordination point for NADP(+). 389–392 (CFGP) provides a ligand contact to FAD.

The protein belongs to the globin family. Two-domain flavohemoproteins subfamily. It in the C-terminal section; belongs to the flavoprotein pyridine nucleotide cytochrome reductase family. It depends on heme b as a cofactor. The cofactor is FAD.

It carries out the reaction 2 nitric oxide + NADPH + 2 O2 = 2 nitrate + NADP(+) + H(+). The catalysed reaction is 2 nitric oxide + NADH + 2 O2 = 2 nitrate + NAD(+) + H(+). Functionally, is involved in NO detoxification in an aerobic process, termed nitric oxide dioxygenase (NOD) reaction that utilizes O(2) and NAD(P)H to convert NO to nitrate, which protects the bacterium from various noxious nitrogen compounds. Therefore, plays a central role in the inducible response to nitrosative stress. This Yersinia pestis protein is Flavohemoprotein.